We begin with the raw amino-acid sequence, 470 residues long: SHUGOSHIN 2 (470 aa).

The stretch at 72–113 (IQKLRINLRSVQEKNLQLAQANSQMLAELNTNRDRLKDLQHE) forms a coiled coil. 2 stretches are compositionally biased toward basic and acidic residues: residues 131–143 (VLPR…KDKV) and 150–162 (GDCK…DIKH). 2 disordered regions span residues 131–176 (VLPR…IKSS) and 358–470 (ESAG…RRKC). A compositionally biased stretch (basic residues) spans 163 to 172 (KDTKRKRTTR). A compositionally biased stretch (basic and acidic residues) spans 370-381 (SESRHETKEITR). Over residues 382 to 392 (KRSFSTRRQST) the composition is skewed to basic residues. Basic and acidic residues-rich tracts occupy residues 396 to 406 (SQTDEAIKEIA), 423 to 438 (TESK…EGMT), and 449 to 462 (HAAE…EVSL).

Belongs to the shugoshin family.

Functionally, dispensable for both meiotic and mitotic cell cycle progression. Required with SGO1 for full protection of centromeric cohesion during anaphase I. Required to prevent precocious release of pericentromeric cohesins during meiosis. Acts redundantly to SGO1. This Arabidopsis thaliana (Mouse-ear cress) protein is SHUGOSHIN 2.